A 197-amino-acid chain; its full sequence is Probable nicotinate-nucleotide adenylyltransferase (197 aa).

This sequence belongs to the NadD family.

It carries out the reaction nicotinate beta-D-ribonucleotide + ATP + H(+) = deamido-NAD(+) + diphosphate. Its pathway is cofactor biosynthesis; NAD(+) biosynthesis; deamido-NAD(+) from nicotinate D-ribonucleotide: step 1/1. Its function is as follows. Catalyzes the reversible adenylation of nicotinate mononucleotide (NaMN) to nicotinic acid adenine dinucleotide (NaAD). The sequence is that of Probable nicotinate-nucleotide adenylyltransferase from Pseudothermotoga lettingae (strain ATCC BAA-301 / DSM 14385 / NBRC 107922 / TMO) (Thermotoga lettingae).